A 357-amino-acid chain; its full sequence is Peptide chain release factor 1 (357 aa).

Gln-236 carries the N5-methylglutamine modification. Residues 283-309 (ERRKKDQERANNRREQIGSGDRSERIR) show a composition bias toward basic and acidic residues. Residues 283–313 (ERRKKDQERANNRREQIGSGDRSERIRTYNF) are disordered.

Belongs to the prokaryotic/mitochondrial release factor family. In terms of processing, methylated by PrmC. Methylation increases the termination efficiency of RF1.

Its subcellular location is the cytoplasm. Its function is as follows. Peptide chain release factor 1 directs the termination of translation in response to the peptide chain termination codons UAG and UAA. The protein is Peptide chain release factor 1 of Rickettsia bellii (strain OSU 85-389).